Consider the following 1419-residue polypeptide: Multidrug resistance protein 1 (1419 aa).

Residues 1-37 are r domain; regulates transporter activity; it reads MGKEQKEKKDGNLSIKEEVEKELNKKSTAELFRKIKN. At 1-60 the chain is on the cytoplasmic side; sequence MGKEQKEKKDGNLSIKEEVEKELNKKSTAELFRKIKNEKISFFLPFKCLPAQHRKLLFIS. Residues 58-345 enclose the ABC transmembrane type-1 1 domain; it reads FISFVCAVLS…ILPNITEYMK (288 aa). Residues 61–81 traverse the membrane as a helical segment; it reads FVCAVLSGGTLPFFISVFGVI. Residues 82 to 90 are Vacuolar-facing; the sequence is LKNMNLGDD. Residues 91-111 traverse the membrane as a helical segment; that stretch reads INPIILSLVSIGLVQFILSMI. The Cytoplasmic portion of the chain corresponds to 112 to 168; it reads SSYCMDVITSKILKTLKLEYLRSVFYQDGQFHDNNPGSKLRSDLDFYLEQVSSGIGT. Residues 169 to 189 form a helical membrane-spanning segment; that stretch reads KFITIFTYASSFLGLYIWSLI. The Vacuolar segment spans residues 190–191; the sequence is KN. A helical transmembrane segment spans residues 192-212; it reads ARLTLCITCVFPLIYVCGVIC. At 213 to 275 the chain is on the cytoplasmic side; sequence NKKVKLNKKT…KYILKANFVE (63 aa). A helical transmembrane segment spans residues 276–296; the sequence is ALHIGLINGLILVSYAFGFWY. Topologically, residues 297–316 are vacuolar; it reads GTRIIINSATNQYPNNDFNG. The chain crosses the membrane as a helical span at residues 317–337; it reads ASVISILLGVLISMFMLTIIL. Over 338–788 the chain is Cytoplasmic; it reads PNITEYMKAL…YKEIFSYKKD (451 aa). The region spanning 378 to 662 is the ABC transporter 1 domain; sequence IEFKNVRFHY…NNNNNNNNNK (285 aa). 14 residues coordinate ATP: Tyr-387, Thr-389, Arg-390, Ser-415, Cys-417, Gly-418, Lys-419, Ser-420, Thr-421, Gln-462, Lys-562, Ser-564, Gly-566, and Gln-567. A Mg(2+)-binding site is contributed by Gln-462. Disordered stretches follow at residues 639–665 and 697–752; these read ERSD…KINN and SSNK…TAEN. Low complexity-rich tracts occupy residues 643–665 and 697–715; these read NNNN…KINN and SSNK…NKSS. Over residues 723 to 749 the composition is skewed to polar residues; sequence GNDADNMNSLSIHENENISNNRNCKNT. The helical transmembrane segment at 789-809 threads the bilayer; the sequence is VTIIFFSILVAGGLYPVFALL. The region spanning 791-1083 is the ABC transmembrane type-1 2 domain; sequence IIFFSILVAG…GSYAGKLMSL (293 aa). Topologically, residues 810–829 are vacuolar; sequence YARYVSTLFDFANLEYNSNK. The helical transmembrane segment at 830–850 threads the bilayer; the sequence is YSIYILLIAIAMFISETLKNY. At 851 to 907 the chain is on the cytoplasmic side; it reads YNNKIGEKVEKTMKRRLFENILYQEMSFFDQDKNTPGVLSAHINRDVHLLKTGLVNN. The next 2 membrane-spanning stretches (helical) occupy residues 908-928 and 929-949; these read IVIF…SFYF and CPIV…VFAV. Topologically, residues 950 to 1032 are cytoplasmic; that stretch reads RARLTKSKEI…RIIVNAALWG (83 aa). The helical transmembrane segment at 1033-1053 threads the bilayer; it reads FSQSAQLFINSFAYWFGSFLI. At 1054 to 1057 the chain is on the vacuolar side; that stretch reads KRGT. Residues 1058-1078 traverse the membrane as a helical segment; that stretch reads ILVDDFMKSLFTFIFTGSYAG. Residues 1079–1419 lie on the Cytoplasmic side of the membrane; it reads KLMSLKGDSE…IYKKYVKLAK (341 aa). The ABC transporter 2 domain occupies 1126-1416; sequence VDIKDVNFRY…QDGIYKKYVK (291 aa). The ATP site is built by Tyr-1135, Arg-1138, Thr-1163, Gly-1164, Gly-1166, Lys-1167, Ser-1168, Thr-1169, Gln-1256, Leu-1312, Ser-1313, Gly-1315, and Gln-1316. Ser-1168 serves as a coordination point for Mg(2+). Gln-1256 contacts Mg(2+).

This sequence belongs to the ABC transporter superfamily. ABCB family. Multidrug resistance exporter (TC 3.A.1.201) subfamily.

The protein resides in the vacuole membrane. It carries out the reaction ATP + H2O + xenobioticSide 1 = ADP + phosphate + xenobioticSide 2.. In terms of biological role, energy-dependent efflux pump responsible for decreased drug accumulation in multidrug-resistant cells. Transports lumefantrine, mefloquine, chloroquine, quinine, quinidine, amodiaquine, piperaquine, dihydroartemisinin and quinacrine. This is Multidrug resistance protein 1 from Plasmodium falciparum (isolate 3D7).